The following is a 179-amino-acid chain: Bifunctional protein PyrR (179 aa).

The PRPP-binding signature appears at 100–112; that stretch reads VILVDDVLFTGRT.

This sequence belongs to the purine/pyrimidine phosphoribosyltransferase family. PyrR subfamily.

The enzyme catalyses UMP + diphosphate = 5-phospho-alpha-D-ribose 1-diphosphate + uracil. Regulates the transcription of the pyrimidine nucleotide (pyr) operon in response to exogenous pyrimidines. Functionally, also displays a weak uracil phosphoribosyltransferase activity which is not physiologically significant. This Actinobacillus succinogenes (strain ATCC 55618 / DSM 22257 / CCUG 43843 / 130Z) protein is Bifunctional protein PyrR.